A 184-amino-acid chain; its full sequence is Large ribosomal subunit protein uL6 (184 aa).

Belongs to the universal ribosomal protein uL6 family. As to quaternary structure, part of the 50S ribosomal subunit.

In terms of biological role, this protein binds to the 23S rRNA, and is important in its secondary structure. It is located near the subunit interface in the base of the L7/L12 stalk, and near the tRNA binding site of the peptidyltransferase center. This Pyrococcus furiosus (strain ATCC 43587 / DSM 3638 / JCM 8422 / Vc1) protein is Large ribosomal subunit protein uL6.